The following is a 92-amino-acid chain: Bombyxin A-9 (92 aa).

An N-terminal signal peptide occupies residues 1-19 (MKLLLAIALMLTTVMWAST). A Pyrrolidone carboxylic acid modification is found at Q20. 3 disulfides stabilise this stretch: C29–C79, C41–C92, and C78–C83. Residues 50–71 (SDAQFASYGSAWLMPYSEGRDQ) constitute a propeptide, c peptide like.

It belongs to the insulin family. As to quaternary structure, heterodimer of a B chain and an A chain linked by two disulfide bonds.

The protein resides in the secreted. Functionally, brain peptide responsible for activation of prothoracic glands to produce ecdysone in insects. This is Bombyxin A-9 (BBXA9) from Bombyx mori (Silk moth).